Reading from the N-terminus, the 263-residue chain is Endonuclease 8 (263 aa).

Pro2 functions as the Schiff-base intermediate with DNA in the catalytic mechanism. The active-site Proton donor is the Glu3. The Proton donor; for beta-elimination activity role is filled by Lys53. 3 residues coordinate DNA: Gln70, Arg125, and Asn169. An FPG-type zinc finger spans residues 229–263; it reads KVFHRDGELCERCGGIIEKTTLSSRPFYWCPGCQH. The active-site Proton donor; for delta-elimination activity is the Arg253.

It belongs to the FPG family. Requires Zn(2+) as cofactor.

It carries out the reaction 2'-deoxyribonucleotide-(2'-deoxyribose 5'-phosphate)-2'-deoxyribonucleotide-DNA = a 3'-end 2'-deoxyribonucleotide-(2,3-dehydro-2,3-deoxyribose 5'-phosphate)-DNA + a 5'-end 5'-phospho-2'-deoxyribonucleoside-DNA + H(+). Functionally, involved in base excision repair of DNA damaged by oxidation or by mutagenic agents. Acts as a DNA glycosylase that recognizes and removes damaged bases. Has a preference for oxidized pyrimidines, such as thymine glycol, 5,6-dihydrouracil and 5,6-dihydrothymine. Has AP (apurinic/apyrimidinic) lyase activity and introduces nicks in the DNA strand. Cleaves the DNA backbone by beta-delta elimination to generate a single-strand break at the site of the removed base with both 3'- and 5'-phosphates. The chain is Endonuclease 8 from Shigella boydii serotype 4 (strain Sb227).